Reading from the N-terminus, the 80-residue chain is Large ribosomal subunit protein bL31 (80 aa).

The Zn(2+) site is built by C16, C18, C38, and C41.

Belongs to the bacterial ribosomal protein bL31 family. Type A subfamily. Part of the 50S ribosomal subunit. The cofactor is Zn(2+).

In terms of biological role, binds the 23S rRNA. The sequence is that of Large ribosomal subunit protein bL31 from Mycobacterium bovis (strain ATCC BAA-935 / AF2122/97).